The sequence spans 306 residues: Type 3 secretion system translocon protein SctB (306 aa).

Residues 128–152 form a helical membrane-spanning segment; that stretch reads LMIAMAVVSGIMAATSTVASAFSIA.

Belongs to the SctB/YopD family. The core secretion machinery of the T3SS is composed of approximately 20 different proteins, including cytoplasmic components, a base, an export apparatus and a needle. This subunit is involved in the formation of a pore, called the translocon, in host membrane. Interacts with YopB/SctE and YopE. Together with YopB/SctE, forms a multimeric integral membrane complex with a mass of between 500 and 700 kDa. Interacts with its cognate chaperone SycD.

It localises to the secreted. The protein resides in the host membrane. Its function is as follows. Component of the type III secretion system (T3SS), also called injectisome, which is used to inject bacterial effector proteins into eukaryotic host cells. YopB/SctE and YopD/SctB are inserted into the host membrane where they form a pore and allow the translocation of effector proteins into the cytosol of target cells. In terms of biological role, involved in pathogenesis. Essential for the establishment of Yersinia infections in a mouse model system, but not for the targeting of effector Yops. May modulate the host's immune response at a distance from the site of infection. The sequence is that of Type 3 secretion system translocon protein SctB from Yersinia enterocolitica.